The following is a 367-amino-acid chain: Probable thylakoidal processing peptidase 2, chloroplastic (367 aa).

Residues M1–R68 constitute a chloroplast transit peptide. The disordered stretch occupies residues D53 to A72. A compositionally biased stretch (low complexity) spans G62 to A72. Residues E185–A205 traverse the membrane as a helical segment. Residues E206–S367 lie on the Lumenal, thylakoid side of the membrane. S214 is an active-site residue.

It belongs to the peptidase S26 family.

Its subcellular location is the plastid. The protein localises to the chloroplast thylakoid membrane. It carries out the reaction Cleavage of hydrophobic, N-terminal signal or leader sequences from secreted and periplasmic proteins.. In terms of biological role, cleaves the thylakoid-transfer domain from a chloroplast protein. This is Probable thylakoidal processing peptidase 2, chloroplastic (TPP2) from Arabidopsis thaliana (Mouse-ear cress).